The chain runs to 415 residues: Serine--tRNA ligase (415 aa).

L-serine is bound at residue 231 to 233; that stretch reads TAE. 262–264 provides a ligand contact to ATP; that stretch reads RSE. Residue E285 participates in L-serine binding. 349 to 352 is a binding site for ATP; sequence EISS. S383 serves as a coordination point for L-serine.

This sequence belongs to the class-II aminoacyl-tRNA synthetase family. Type-1 seryl-tRNA synthetase subfamily. As to quaternary structure, homodimer. The tRNA molecule binds across the dimer.

It localises to the cytoplasm. It catalyses the reaction tRNA(Ser) + L-serine + ATP = L-seryl-tRNA(Ser) + AMP + diphosphate + H(+). The enzyme catalyses tRNA(Sec) + L-serine + ATP = L-seryl-tRNA(Sec) + AMP + diphosphate + H(+). The protein operates within aminoacyl-tRNA biosynthesis; selenocysteinyl-tRNA(Sec) biosynthesis; L-seryl-tRNA(Sec) from L-serine and tRNA(Sec): step 1/1. In terms of biological role, catalyzes the attachment of serine to tRNA(Ser). Is also able to aminoacylate tRNA(Sec) with serine, to form the misacylated tRNA L-seryl-tRNA(Sec), which will be further converted into selenocysteinyl-tRNA(Sec). The sequence is that of Serine--tRNA ligase from Helicobacter pylori (strain Shi470).